Here is a 156-residue protein sequence, read N- to C-terminus: Cytochrome c-type biogenesis protein CcmE (156 aa).

At 1–7 (MTRRQRR) the chain is on the cytoplasmic side. Residues 8 to 28 (LGILLAALVCAGAATALTLNA) form a helical; Signal-anchor for type II membrane protein membrane-spanning segment. At 29-156 (FRSNLVFFFS…AKESARSASR (128 aa)) the chain is on the periplasmic side. Heme contacts are provided by histidine 123 and tyrosine 127.

It belongs to the CcmE/CycJ family.

It is found in the cell inner membrane. Functionally, heme chaperone required for the biogenesis of c-type cytochromes. Transiently binds heme delivered by CcmC and transfers the heme to apo-cytochromes in a process facilitated by CcmF and CcmH. The polypeptide is Cytochrome c-type biogenesis protein CcmE (Ralstonia pickettii (strain 12J)).